Reading from the N-terminus, the 66-residue chain is MKARDLHQLSIQELEAKLKELKTELFKLRITKKIEGLKEPSKIRDTKRDIARILTVINEKRRGQAV.

This sequence belongs to the universal ribosomal protein uL29 family.

The chain is Large ribosomal subunit protein uL29 from Hydrogenobaculum sp. (strain Y04AAS1).